Here is a 209-residue protein sequence, read N- to C-terminus: NDR1/HIN1-like protein 1 (209 aa).

The chain crosses the membrane as a helical span at residues 18 to 38; sequence IFWSIIFVLFIIFLTILLIWA. An N-linked (GlcNAc...) asparagine glycan is attached at asparagine 58.

Expressed in rosette leaves, cauline leaves, stems, and siliques, and at lower levels in roots and flowers.

The protein resides in the cell membrane. Functionally, may play a role in plant immunity. The protein is NDR1/HIN1-like protein 1 of Arabidopsis thaliana (Mouse-ear cress).